The following is a 540-amino-acid chain: DNA topoisomerase 1 (540 aa).

One can recognise a Toprim domain in the interval 1–110 (MELFIVESPT…NIKRAVFYEI (110 aa)). E7 and D79 together coordinate Mg(2+). The Topo IA-type catalytic domain occupies 126–536 (NMNLVYAQFA…FMEKIFGKEL (411 aa)). An interaction with DNA region spans residues 161 to 166 (SAGRVQ). Y281 acts as the O-(5'-phospho-DNA)-tyrosine intermediate in catalysis.

The protein belongs to the type IA topoisomerase family. In terms of assembly, monomer. The cofactor is Mg(2+).

The enzyme catalyses ATP-independent breakage of single-stranded DNA, followed by passage and rejoining.. Functionally, releases the supercoiling and torsional tension of DNA, which is introduced during the DNA replication and transcription, by transiently cleaving and rejoining one strand of the DNA duplex. Introduces a single-strand break via transesterification at a target site in duplex DNA. The scissile phosphodiester is attacked by the catalytic tyrosine of the enzyme, resulting in the formation of a DNA-(5'-phosphotyrosyl)-enzyme intermediate and the expulsion of a 3'-OH DNA strand. The free DNA strand then undergoes passage around the unbroken strand, thus removing DNA supercoils. Finally, in the religation step, the DNA 3'-OH attacks the covalent intermediate to expel the active-site tyrosine and restore the DNA phosphodiester backbone. The protein is DNA topoisomerase 1 of Aquifex aeolicus (strain VF5).